The chain runs to 447 residues: C4-dicarboxylate transport protein 3 (447 aa).

Helical transmembrane passes span 5–27 (TLGKLYVQVLIGVAAGIVQGVAA), 42–64 (IKLIKMVFAPIIFATVTLGIARM), 77–99 (ALVYFEVLSTFALALGLIVVNLV), 146–165 (LARNDILQILVFATLFGIAL), 186–208 (VFSIVGMIMRLAPIAAFGAMAFT), 223–245 (LMATMYLTCVLFVAIVLGGVARL), 315–337 (IFVAQATNTPLTLTDQLVVLGVL), and 352–374 (FITLAATLASLGKIPVAGMVLLL).

Belongs to the dicarboxylate/amino acid:cation symporter (DAACS) (TC 2.A.23) family.

The protein resides in the cell inner membrane. Responsible for the transport of dicarboxylates such as succinate, fumarate, and malate from the periplasm across the membrane. This chain is C4-dicarboxylate transport protein 3 (dctA3), found in Ralstonia nicotianae (strain ATCC BAA-1114 / GMI1000) (Ralstonia solanacearum).